The chain runs to 1138 residues: Exportin-6-B (1138 aa).

One can recognise an Importin N-terminal domain in the interval 31–97; it reads IESLLNNFAQ…RSSLPKLLLS (67 aa). The span at 291–307 shows a compositional bias: low complexity; it reads SVTTNTTSSVVNGGSSS. Positions 291–315 are disordered; the sequence is SVTTNTTSSVVNGGSSSPPLHSAAP.

The protein belongs to the exportin family.

It is found in the nucleus. It localises to the cytoplasm. In terms of biological role, mediates the nuclear export of actin and profilin-actin complexes in somatic cells. Oocyte nuclei lack active actin export. Mediates the nuclear export of actin and profilin-actin complexes in somatic cells. This chain is Exportin-6-B (xpo6-b), found in Xenopus laevis (African clawed frog).